The primary structure comprises 232 residues: Putative N-acetylmannosamine-6-phosphate 2-epimerase (232 aa).

It belongs to the NanE family.

The enzyme catalyses an N-acyl-D-glucosamine 6-phosphate = an N-acyl-D-mannosamine 6-phosphate. The protein operates within amino-sugar metabolism; N-acetylneuraminate degradation; D-fructose 6-phosphate from N-acetylneuraminate: step 3/5. Functionally, converts N-acetylmannosamine-6-phosphate (ManNAc-6-P) to N-acetylglucosamine-6-phosphate (GlcNAc-6-P). The chain is Putative N-acetylmannosamine-6-phosphate 2-epimerase from Corynebacterium glutamicum (strain R).